Here is a 103-residue protein sequence, read N- to C-terminus: Cytochrome c-552 (103 aa).

Residues 1 to 22 (MKTAWLGTFAASALLVAGYAQA) form the signal peptide. Residues cysteine 32, cysteine 35, histidine 36, and methionine 81 each contribute to the heme c site.

In terms of assembly, monomer. Binds 1 heme c group covalently per subunit.

Its subcellular location is the periplasm. Monoheme c-type cytochrome. Probable electron donor to membrane cytochrome oxidase and to periplasmic nitrite reductase. This is Cytochrome c-552 (cyt) from Nitrosomonas europaea (strain ATCC 19718 / CIP 103999 / KCTC 2705 / NBRC 14298).